A 230-amino-acid chain; its full sequence is Cytidylate kinase (230 aa).

Residue 12 to 20 (GPSGTGKST) coordinates ATP.

Belongs to the cytidylate kinase family. Type 1 subfamily.

It localises to the cytoplasm. It catalyses the reaction CMP + ATP = CDP + ADP. The enzyme catalyses dCMP + ATP = dCDP + ADP. The protein is Cytidylate kinase of Corynebacterium glutamicum (strain ATCC 13032 / DSM 20300 / JCM 1318 / BCRC 11384 / CCUG 27702 / LMG 3730 / NBRC 12168 / NCIMB 10025 / NRRL B-2784 / 534).